The following is a 1029-amino-acid chain: Probable E3 ubiquitin protein ligase C167.07c (1029 aa).

One can recognise an IQ domain in the interval 46–75 (AENNSVAVQSLSRGFLARRKFKQDFRERWI). An HECT domain is found at 692–1029 (FGKLLKGPIR…VRSGVGFGFS (338 aa)). The active-site Glycyl thioester intermediate is Cys-997.

The protein localises to the cytoplasm. Its subcellular location is the nucleus. The catalysed reaction is S-ubiquitinyl-[E2 ubiquitin-conjugating enzyme]-L-cysteine + [acceptor protein]-L-lysine = [E2 ubiquitin-conjugating enzyme]-L-cysteine + N(6)-ubiquitinyl-[acceptor protein]-L-lysine.. Probable E3 ubiquitin-protein ligase which mediates ubiquitination and subsequent proteasomal degradation of target proteins. This chain is Probable E3 ubiquitin protein ligase C167.07c, found in Schizosaccharomyces pombe (strain 972 / ATCC 24843) (Fission yeast).